We begin with the raw amino-acid sequence, 383 residues long: Lipid-A-disaccharide synthase (383 aa).

The protein belongs to the LpxB family.

It carries out the reaction 2-N,3-O-bis[(3R)-3-hydroxytetradecanoyl]-alpha-D-glucosaminyl 1-phosphate + UDP-2-N,3-O-bis[(3R)-3-hydroxytetradecanoyl]-alpha-D-glucosamine = lipid A disaccharide (E. coli) + UDP + H(+). It catalyses the reaction a lipid X + a UDP-2-N,3-O-bis[(3R)-3-hydroxyacyl]-alpha-D-glucosamine = a lipid A disaccharide + UDP + H(+). The protein operates within glycolipid biosynthesis; lipid IV(A) biosynthesis; lipid IV(A) from (3R)-3-hydroxytetradecanoyl-[acyl-carrier-protein] and UDP-N-acetyl-alpha-D-glucosamine: step 5/6. Functionally, condensation of UDP-2,3-diacylglucosamine and 2,3-diacylglucosamine-1-phosphate to form lipid A disaccharide, a precursor of lipid A, a phosphorylated glycolipid that anchors the lipopolysaccharide to the outer membrane of the cell. This chain is Lipid-A-disaccharide synthase, found in Pectobacterium carotovorum subsp. carotovorum (strain PC1).